The chain runs to 93 residues: Small ribosomal subunit protein uS15c (93 aa).

This sequence belongs to the universal ribosomal protein uS15 family. In terms of assembly, part of the 30S ribosomal subunit.

It is found in the plastid. The protein localises to the chloroplast. This Jasminum nudiflorum (Winter jasmine) protein is Small ribosomal subunit protein uS15c (rps15).